The following is a 511-amino-acid chain: Bifunctional purine biosynthesis protein PurH (511 aa).

Positions 1-145 (MKRRAIISVS…KNHAYVTAVV (145 aa)) constitute an MGS-like domain.

This sequence belongs to the PurH family.

It catalyses the reaction (6R)-10-formyltetrahydrofolate + 5-amino-1-(5-phospho-beta-D-ribosyl)imidazole-4-carboxamide = 5-formamido-1-(5-phospho-D-ribosyl)imidazole-4-carboxamide + (6S)-5,6,7,8-tetrahydrofolate. The catalysed reaction is IMP + H2O = 5-formamido-1-(5-phospho-D-ribosyl)imidazole-4-carboxamide. Its pathway is purine metabolism; IMP biosynthesis via de novo pathway; 5-formamido-1-(5-phospho-D-ribosyl)imidazole-4-carboxamide from 5-amino-1-(5-phospho-D-ribosyl)imidazole-4-carboxamide (10-formyl THF route): step 1/1. It functions in the pathway purine metabolism; IMP biosynthesis via de novo pathway; IMP from 5-formamido-1-(5-phospho-D-ribosyl)imidazole-4-carboxamide: step 1/1. The polypeptide is Bifunctional purine biosynthesis protein PurH (Anoxybacillus flavithermus (strain DSM 21510 / WK1)).